The following is a 365-amino-acid chain: Zinc finger TRAF-type-containing protein 1-B (365 aa).

Residues 1-56 form a disordered region; the sequence is MSEEREAPGPLASSSAGLGAEVGQEEVPGGAGPARLLLLPSDSDGPPKKRLRSEAE. The segment at 72-117 adopts an RING-type; degenerate zinc-finger fold; sequence CAVCLDLPKASVYQCTNGHLMCAGCFIHLLADARLKEEQATCPNCR. The TRAF-type zinc finger occupies 113-186; that stretch reads CPNCRCEISK…PWQGPYHELT (74 aa).

Belongs to the ZFTRAF1 family. As to quaternary structure, interacts with LGALS3.

The protein resides in the cytoplasm. In Xenopus laevis (African clawed frog), this protein is Zinc finger TRAF-type-containing protein 1-B.